Here is a 413-residue protein sequence, read N- to C-terminus: Glycosyl hydrolase family 109 protein 2 (413 aa).

NAD(+) is bound by residues 26-27, Asp48, 96-99, 116-117, and Asn145; these read NR, WLTH, and EV. Substrate is bound at residue Tyr174. Residues 191-195 and Tyr208 contribute to the NAD(+) site; that span reads YHNHW. Residues 208–211 and Tyr290 each bind substrate; that span reads YPTH.

This sequence belongs to the Gfo/Idh/MocA family. Glycosyl hydrolase 109 subfamily. NAD(+) is required as a cofactor.

Functionally, glycosidase. This is Glycosyl hydrolase family 109 protein 2 from Phocaeicola vulgatus (strain ATCC 8482 / DSM 1447 / JCM 5826 / CCUG 4940 / NBRC 14291 / NCTC 11154) (Bacteroides vulgatus).